The primary structure comprises 427 residues: Glutamate-1-semialdehyde 2,1-aminomutase (427 aa).

Lysine 265 is modified (N6-(pyridoxal phosphate)lysine).

The protein belongs to the class-III pyridoxal-phosphate-dependent aminotransferase family. HemL subfamily. Homodimer. It depends on pyridoxal 5'-phosphate as a cofactor.

It is found in the cytoplasm. It catalyses the reaction (S)-4-amino-5-oxopentanoate = 5-aminolevulinate. Its pathway is porphyrin-containing compound metabolism; protoporphyrin-IX biosynthesis; 5-aminolevulinate from L-glutamyl-tRNA(Glu): step 2/2. The sequence is that of Glutamate-1-semialdehyde 2,1-aminomutase from Burkholderia vietnamiensis (strain G4 / LMG 22486) (Burkholderia cepacia (strain R1808)).